The sequence spans 205 residues: Protein N-terminal glutamine amidohydrolase (205 aa).

Residues C20, H74, and D90 contribute to the active site.

It belongs to the NTAQ1 family. In terms of assembly, monomer.

The catalysed reaction is N-terminal L-glutaminyl-[protein] + H2O = N-terminal L-glutamyl-[protein] + NH4(+). In terms of biological role, mediates the side-chain deamidation of N-terminal glutamine residues to glutamate, an important step in N-end rule pathway of protein degradation. Conversion of the resulting N-terminal glutamine to glutamate renders the protein susceptible to arginylation, polyubiquitination and degradation as specified by the N-end rule. Does not act on substrates with internal or C-terminal glutamine and does not act on non-glutamine residues in any position. The protein is Protein N-terminal glutamine amidohydrolase (tun) of Drosophila mojavensis (Fruit fly).